A 184-amino-acid chain; its full sequence is Peptidyl-tRNA hydrolase (184 aa).

Tyrosine 14 provides a ligand contact to tRNA. Histidine 19 serves as the catalytic Proton acceptor. TRNA-binding residues include phenylalanine 60 and asparagine 62.

The protein belongs to the PTH family. In terms of assembly, monomer.

It localises to the cytoplasm. It catalyses the reaction an N-acyl-L-alpha-aminoacyl-tRNA + H2O = an N-acyl-L-amino acid + a tRNA + H(+). Functionally, hydrolyzes ribosome-free peptidyl-tRNAs (with 1 or more amino acids incorporated), which drop off the ribosome during protein synthesis, or as a result of ribosome stalling. In terms of biological role, catalyzes the release of premature peptidyl moieties from peptidyl-tRNA molecules trapped in stalled 50S ribosomal subunits, and thus maintains levels of free tRNAs and 50S ribosomes. This Mesomycoplasma hyopneumoniae (strain 232) (Mycoplasma hyopneumoniae) protein is Peptidyl-tRNA hydrolase.